Consider the following 313-residue polypeptide: tRNA dimethylallyltransferase (313 aa).

Position 10–17 (10–17 (GPTASGKT)) interacts with ATP. 12 to 17 (TASGKT) lines the substrate pocket. Interaction with substrate tRNA regions lie at residues 35–38 (DSAM), 159–163 (QRIQR), and 240–245 (RCVGYR).

It belongs to the IPP transferase family. Monomer. The cofactor is Mg(2+).

It catalyses the reaction adenosine(37) in tRNA + dimethylallyl diphosphate = N(6)-dimethylallyladenosine(37) in tRNA + diphosphate. Catalyzes the transfer of a dimethylallyl group onto the adenine at position 37 in tRNAs that read codons beginning with uridine, leading to the formation of N6-(dimethylallyl)adenosine (i(6)A). In Legionella pneumophila (strain Corby), this protein is tRNA dimethylallyltransferase.